The primary structure comprises 157 residues: MRIGHGYDVHRFAEGDFITLGGVRIAHGFGLLAHSDGDVLLHALSDALLGAAALGDIGKHFPDTDPQFKGADSRVLLRHVLKQIHGKGWKVGNVDATIVAQAPKMAPHIDAMRALIAEDLLVELDQVNVKATTTEKLGFTGREEGIAVHAVALLLRA.

2 residues coordinate a divalent metal cation: aspartate 8 and histidine 10. 4-CDP-2-C-methyl-D-erythritol 2-phosphate is bound by residues 8–10 and 34–35; these read DVH and HS. Histidine 42 is a binding site for a divalent metal cation. 4-CDP-2-C-methyl-D-erythritol 2-phosphate-binding positions include 56-58, 61-65, 100-106, 132-135, phenylalanine 139, and arginine 142; these read DIG, FPDTD, AQAPKMA, and TTTE.

The protein belongs to the IspF family. As to quaternary structure, homotrimer. A divalent metal cation serves as cofactor.

It catalyses the reaction 4-CDP-2-C-methyl-D-erythritol 2-phosphate = 2-C-methyl-D-erythritol 2,4-cyclic diphosphate + CMP. The protein operates within isoprenoid biosynthesis; isopentenyl diphosphate biosynthesis via DXP pathway; isopentenyl diphosphate from 1-deoxy-D-xylulose 5-phosphate: step 4/6. Functionally, involved in the biosynthesis of isopentenyl diphosphate (IPP) and dimethylallyl diphosphate (DMAPP), two major building blocks of isoprenoid compounds. Catalyzes the conversion of 4-diphosphocytidyl-2-C-methyl-D-erythritol 2-phosphate (CDP-ME2P) to 2-C-methyl-D-erythritol 2,4-cyclodiphosphate (ME-CPP) with a corresponding release of cytidine 5-monophosphate (CMP). This chain is 2-C-methyl-D-erythritol 2,4-cyclodiphosphate synthase, found in Pseudomonas syringae pv. tomato (strain ATCC BAA-871 / DC3000).